Reading from the N-terminus, the 83-residue chain is MSVGDETTIFDFGNQMPKDIHDTLEIVYNALEEKGYNPINQIVGYLMSGDPAYIPRLNDARNLIKRHERDEIIEELVRVYLKK.

Belongs to the UPF0297 family.

This chain is UPF0297 protein LCK_00468, found in Leuconostoc citreum (strain KM20).